The primary structure comprises 283 residues: tRNA-cytidine(32) 2-sulfurtransferase (283 aa).

The PP-loop motif signature appears at 37–42; it reads SGGKDS. Positions 112, 115, and 203 each coordinate [4Fe-4S] cluster.

It belongs to the TtcA family. As to quaternary structure, homodimer. Mg(2+) is required as a cofactor. It depends on [4Fe-4S] cluster as a cofactor.

Its subcellular location is the cytoplasm. It carries out the reaction cytidine(32) in tRNA + S-sulfanyl-L-cysteinyl-[cysteine desulfurase] + AH2 + ATP = 2-thiocytidine(32) in tRNA + L-cysteinyl-[cysteine desulfurase] + A + AMP + diphosphate + H(+). Its pathway is tRNA modification. Catalyzes the ATP-dependent 2-thiolation of cytidine in position 32 of tRNA, to form 2-thiocytidine (s(2)C32). The sulfur atoms are provided by the cysteine/cysteine desulfurase (IscS) system. This Legionella pneumophila (strain Corby) protein is tRNA-cytidine(32) 2-sulfurtransferase.